The sequence spans 612 residues: Mineralocorticoid receptor (612 aa).

The segment at 1–228 is modulating; that stretch reads GNEIADSTVS…STGPSRPSKV (228 aa). Zn(2+) is bound by residues cysteine 229, cysteine 232, cysteine 246, cysteine 249, cysteine 269, cysteine 275, cysteine 285, and cysteine 288. NR C4-type zinc fingers lie at residues 229-249 and 269-293; these read CLVC…CGSC and CAGR…LQKC. A DNA-binding region (nuclear receptor) is located at residues 229-298; that stretch reads CLVCGDEASG…RLQKCLQAGM (70 aa). The interval 299–349 is hinge; that stretch reads NLGARKSKKLGKLKGVHEEHPQQPLQQTPTASPKEDTTLTSSSKEPSANSN. A disordered region spans residues 310–348; that stretch reads KLKGVHEEHPQQPLQQTPTASPKEDTTLTSSSKEPSANS. Low complexity predominate over residues 339-348; that stretch reads SSSKEPSANS. The region spanning 350–592 is the NR LBD domain; the sequence is SLVPLISAVS…EFPAMLVEII (243 aa). Residues asparagine 398 and glutamine 404 each contribute to the 21-hydroxyprogesterone site. 2 residues coordinate aldosterone: asparagine 398 and glutamine 404. 2 residues coordinate progesterone: asparagine 398 and glutamine 404. Residues 410-413 form an important for coactivator binding region; the sequence is KWAK. Positions 445 and 573 each coordinate 21-hydroxyprogesterone. Aldosterone-binding residues include arginine 445 and threonine 573. Progesterone is bound by residues arginine 445 and threonine 573.

The protein belongs to the nuclear hormone receptor family. NR3 subfamily.

It is found in the cytoplasm. The protein localises to the nucleus. Its function is as follows. Receptor for both mineralocorticoids (MC) such as aldosterone and glucocorticoids (GC) such as corticosterone or cortisol. Binds to mineralocorticoid response elements (MRE) and transactivates target genes. The effect of MC is to increase ion and water transport and thus raise extracellular fluid volume and blood pressure and lower potassium levels. The protein is Mineralocorticoid receptor (nr3c2) of Xenopus laevis (African clawed frog).